Consider the following 562-residue polypeptide: NAD-dependent malic enzyme (562 aa).

Tyr-101 functions as the Proton donor in the catalytic mechanism. Arg-154 is an NAD(+) binding site. Lys-172 (proton acceptor) is an active-site residue. A divalent metal cation is bound by residues Glu-243, Asp-244, and Asp-267. Residues Asp-267 and Asn-415 each coordinate NAD(+).

This sequence belongs to the malic enzymes family. In terms of assembly, homotetramer. Requires Mg(2+) as cofactor. The cofactor is Mn(2+).

It catalyses the reaction (S)-malate + NAD(+) = pyruvate + CO2 + NADH. The enzyme catalyses oxaloacetate + H(+) = pyruvate + CO2. This chain is NAD-dependent malic enzyme, found in Aliivibrio salmonicida (strain LFI1238) (Vibrio salmonicida (strain LFI1238)).